A 432-amino-acid chain; its full sequence is Phosphoprotein associated with glycosphingolipid-enriched microdomains 1 (432 aa).

Residues 1–16 (MGPAGSLLGSGQMQIT) lie on the Extracellular side of the membrane. The chain crosses the membrane as a helical; Signal-anchor for type III membrane protein span at residues 17 to 37 (LWGSLAAVAIFFVITFLIFLC). S-palmitoyl cysteine attachment occurs at residues cysteine 37 and cysteine 40. Over 38-432 (SSCDREKKPR…LQQGRDITRL (395 aa)) the chain is Cytoplasmic. Serine 50 and serine 61 each carry phosphoserine. A Phosphotyrosine; by LYN modification is found at tyrosine 105. The span at 110–122 (TSASDLLDSQDST) shows a compositional bias: polar residues. A disordered region spans residues 110–137 (TSASDLLDSQDSTGKPKCHQSRELPRIP). Phosphotyrosine is present on residues tyrosine 163, tyrosine 181, and tyrosine 227. Disordered stretches follow at residues 197–230 (EKGH…YASV) and 244–432 (SILG…ITRL). Over residues 220 to 230 (GKAEFAEYASV) the composition is skewed to basic and acidic residues. Position 229 is a phosphoserine (serine 229). Residues 316-356 (MYSSVNKPGQLVNKSGQSLTVPESTYTSIQGDPQRSPSSCN) are compositionally biased toward polar residues. A Phosphotyrosine; by FYN and LYN modification is found at tyrosine 317. The interval 317 to 320 (YSSV) is interaction with CSK. Serine 354 carries the post-translational modification Phosphoserine. Tyrosine 359 bears the Phosphotyrosine mark. Position 380 is a phosphoserine (serine 380). Phosphotyrosine is present on residues tyrosine 387 and tyrosine 417. Residues 430–432 (TRL) form an interaction with NHERF1 region.

Interacts with FYN. When phosphorylated, interacts with CSK. Interacts with NHERF1/EBP50. In resting T-cells, part of a PAG1-NHERF1-MSN complex which is disrupted upon TCR activation. Interacts with LYN on plasma membrane lipid rafts. Identified in a complex with LYN and STAT3. Palmitoylated. Post-translationally, phosphorylated by FYN on Tyr-317 in resting T-cells; which promotes interaction with CSK. Dephosphorylated by PTPRC/CD45 upon TCR activation; which leads to CSK dissociation. May also be dephosphorylated by PTPN11. Hyperphosphorylated in mast cells upon FCER1 activation. Phosphorylated by LYN. In terms of tissue distribution, ubiquitously expressed. Present in germinal center B-cells, plasma cells, T-cells, monocytes and platelets (at protein level).

It is found in the cell membrane. Negatively regulates TCR (T-cell antigen receptor)-mediated signaling in T-cells and FCER1 (high affinity immunoglobulin epsilon receptor)-mediated signaling in mast cells. Promotes CSK activation and recruitment to lipid rafts, which results in LCK inhibition. Inhibits immunological synapse formation by preventing dynamic arrangement of lipid raft proteins. May be involved in cell adhesion signaling. The chain is Phosphoprotein associated with glycosphingolipid-enriched microdomains 1 (PAG1) from Homo sapiens (Human).